Reading from the N-terminus, the 46-residue chain is METSSPALSVALGVMAVVLGLTGFGVYQAFGPPSKELDDPFDDHED.

A helical membrane pass occupies residues 7-27; the sequence is ALSVALGVMAVVLGLTGFGVY.

This sequence belongs to the PsbN family.

The protein localises to the cellular thylakoid membrane. May play a role in photosystem I and II biogenesis. This is Protein PsbN from Synechococcus sp. (strain CC9902).